Reading from the N-terminus, the 523-residue chain is GMP synthase [glutamine-hydrolyzing] (523 aa).

The Glutamine amidotransferase type-1 domain maps to 9–198 (PVLVVDFGAQ…LTEIAGLEQN (190 aa)). Residue Cys86 is the Nucleophile of the active site. Catalysis depends on residues His172 and Glu174. The region spanning 199–397 (WTAANIAEEL…LGLPEEIVGR (199 aa)) is the GMPS ATP-PPase domain. 227–233 (SGGVDSA) is a binding site for ATP.

Homodimer.

It carries out the reaction XMP + L-glutamine + ATP + H2O = GMP + L-glutamate + AMP + diphosphate + 2 H(+). It participates in purine metabolism; GMP biosynthesis; GMP from XMP (L-Gln route): step 1/1. Functionally, catalyzes the synthesis of GMP from XMP. This chain is GMP synthase [glutamine-hydrolyzing], found in Corynebacterium glutamicum (strain R).